The sequence spans 354 residues: Guanine nucleotide-binding protein G(i) subunit alpha (354 aa).

A lipid anchor (N-myristoyl glycine) is attached at Gly2. Residue Cys3 is the site of S-palmitoyl cysteine attachment. One can recognise a G-alpha domain in the interval Arg32–Phe354. Residues Lys35–Thr48 form a G1 motif region. Residues Gly40–Ser47, Leu175–Thr181, Asp200–Gln204, Asn269–Asp272, and Ala326 each bind GTP. Positions 47 and 181 each coordinate Mg(2+). The tract at residues Asp173–Thr181 is G2 motif. Positions Phe196 to Arg205 are G3 motif. The G4 motif stretch occupies residues Ile265 to Asp272. Residues Thr324 to Thr329 are G5 motif.

This sequence belongs to the G-alpha family. G(i/o/t/z) subfamily. In terms of assembly, g proteins are composed of 3 units; alpha, beta and gamma. The alpha chain contains the guanine nucleotide binding site.

Its function is as follows. Guanine nucleotide-binding proteins (G proteins) are involved as modulators or transducers in various transmembrane signaling systems. This G protein is involved in 1-methyladenine-induced oocyte maturation. The protein is Guanine nucleotide-binding protein G(i) subunit alpha of Patiria pectinifera (Starfish).